Reading from the N-terminus, the 1492-residue chain is Collagen alpha-1(II) chain (1492 aa).

The signal sequence occupies residues 1–26; the sequence is MFSFVDSRTLVLFAATQVILLAVVRC. The propeptide at 27–186 is N-terminal propeptide; it reads QDEEDVLATG…PPGLGGNFAA (160 aa). Positions 36–94 constitute a VWFC domain; that stretch reads GSCVQHGQRYSDKDVWKPEPCQICVCDTGNVLCDEIICEDPKDCPNAEIPFGECCPICP. Residues 98–1255 are disordered; sequence SSTSSGQGVL…ADQASSSVPQ (1158 aa). 2 stretches are compositionally biased toward basic and acidic residues: residues 110 to 121 and 138 to 159; these read QKGEPGDIKDVV and PRGDRGDKGEKGAPGPRGRDGE. A compositionally biased stretch (pro residues) spans 163–178; it reads PGNPGPVGPPGPPGPP. A compositionally biased stretch (low complexity) spans 197-208; the sequence is GGAQMGVMQGPM. The segment at 206–1219 is triple-helical region; the sequence is GPMGPMGPRG…PGPPGPPGPP (1014 aa). The segment covering 213 to 222 has biased composition (pro residues); that stretch reads PRGPPGPTGA. Over residues 223 to 234 the composition is skewed to low complexity; sequence PGPQGFQGNPGE. Residues 236–245 show a composition bias toward gly residues; the sequence is GEPGAGGPMG. The span at 256-270 shows a compositional bias: basic and acidic residues; it reads PGDDGEAGKPGKSGE. Residues 311-320 show a composition bias toward gly residues; the sequence is GAKGEGGATG. Composition is skewed to low complexity over residues 321-333, 340-355, 366-376, and 396-436; these read EAGSPGPMGPRGL, PGASGAAGARGNDGLP, PAGAPGFPGAP, and PRGE…AGAP. Positions 438–447 are enriched in pro residues; the sequence is FPGPRGPPGP. 2 stretches are compositionally biased toward low complexity: residues 480 to 490 and 501 to 517; these read SAGPQGAPGPA and EPGAAGPLGPPGERGAP. The span at 539-548 shows a compositional bias: gly residues; it reads GVPGLGGPKG. Low complexity-rich tracts occupy residues 627–636 and 645–655; these read LLGAPGLRGL and AQGPNGPAGPA. 4-hydroxyproline is present on residues Pro664 and Pro673. 3-hydroxyproline is present on Pro675. A 4-hydroxyproline mark is found at Pro676 and Pro679. Positions 711-741 are enriched in low complexity; sequence ERGSSGPQGLQGPRGLPGTPGTDGPKGATGP. The span at 769-780 shows a compositional bias: basic and acidic residues; sequence KGDRGDTGEKGP. Low complexity-rich tracts occupy residues 838 to 850 and 894 to 910; these read AGFAGPPGADGQA and AQGPPGATGFPGAAGRV. Pro912 is modified (3-hydroxyproline). Residues Pro913, Pro919, and Pro925 each carry the 4-hydroxyproline modification. Positions 919 to 930 are enriched in low complexity; the sequence is PGPSGAPGSAGK. Residues 1010–1019 show a composition bias toward gly residues; sequence GKQGGPGSAG. Low complexity predominate over residues 1105-1114; it reads SGPAGARGLP. The span at 1120-1134 shows a compositional bias: basic and acidic residues; it reads RGDKGEAGEAGERGQ. Composition is skewed to low complexity over residues 1140-1159 and 1176-1186; these read FTGLQGLPGPPGTAGDQGAS and PSGKDGSNGLP. Pro1149 is subject to 3-hydroxyproline. Pro1186 is modified (4-hydroxyproline). Position 1191 is a 3-hydroxyproline (Pro1191). 4-hydroxyproline is present on Pro1192. Pro residues predominate over residues 1204 to 1221; the sequence is AGPPGQPGPPGPPGPPGP. Pro1206 carries the 3-hydroxyproline modification. 2 positions are modified to 4-hydroxyproline: Pro1207 and Pro1210. Pro1212 bears the 3-hydroxyproline mark. 4-hydroxyproline is present on residues Pro1213 and Pro1216. Pro1218 bears the 3-hydroxyproline mark. Pro1219 bears the 4-hydroxyproline mark. A nonhelical region (C-terminal) region spans residues 1220–1246; that stretch reads GPGIDMSAFAGLSQPEKGPDPMRYMRA. Positions 1236-1245 are enriched in basic and acidic residues; that stretch reads KGPDPMRYMR. A propeptide spans 1247–1492 (C-terminal propeptide); it reads DQASSSVPQR…GVDIGPVCFL (246 aa). The 235-residue stretch at 1258-1492 folds into the Fibrillar collagen NC1 domain; it reads VDVEATLKSL…GVDIGPVCFL (235 aa). Intrachain disulfides connect Cys1288-Cys1320, Cys1328-Cys1490, and Cys1398-Cys1443. Ca(2+) is bound by residues Asp1306, Asn1308, Gln1309, Cys1311, and Asp1314. N-linked (GlcNAc...) asparagine glycosylation occurs at Asn1393.

It belongs to the fibrillar collagen family. In terms of assembly, homotrimers of alpha 1(II) chains. Contains mostly 4-hydroxyproline. Prolines at the third position of the tripeptide repeating unit (G-X-P) are 4-hydroxylated in some or all of the chains. Post-translationally, contains 3-hydroxyproline at a few sites. This modification occurs on the first proline residue in the sequence motif Gly-Pro-Hyp, where Hyp is 4-hydroxyproline. In terms of processing, lysine residues at the third position of the tripeptide repeating unit (G-X-Y) are 5-hydroxylated in some or all of the chains. O-glycosylated on hydroxylated lysine residues. The O-linked glycan consists of a Glc-Gal disaccharide.

It is found in the secreted. The protein resides in the extracellular space. Its subcellular location is the extracellular matrix. Functionally, type II collagen is specific for cartilaginous tissues. It is essential for the normal embryonic development of the skeleton, for linear growth and for the ability of cartilage to resist compressive forces. This is Collagen alpha-1(II) chain from Xenopus tropicalis (Western clawed frog).